The primary structure comprises 172 residues: S-ribosylhomocysteine lyase (172 aa).

3 residues coordinate Fe cation: His54, His58, and Cys128.

The protein belongs to the LuxS family. As to quaternary structure, homodimer. Fe cation is required as a cofactor.

It catalyses the reaction S-(5-deoxy-D-ribos-5-yl)-L-homocysteine = (S)-4,5-dihydroxypentane-2,3-dione + L-homocysteine. Its function is as follows. Involved in the synthesis of autoinducer 2 (AI-2) which is secreted by bacteria and is used to communicate both the cell density and the metabolic potential of the environment. The regulation of gene expression in response to changes in cell density is called quorum sensing. Catalyzes the transformation of S-ribosylhomocysteine (RHC) to homocysteine (HC) and 4,5-dihydroxy-2,3-pentadione (DPD). The sequence is that of S-ribosylhomocysteine lyase from Vibrio vulnificus (strain CMCP6).